A 136-amino-acid chain; its full sequence is Active regulator of SIRT1 (136 aa).

The residue at position 7 (Arg-7) is a Citrulline. The disordered stretch occupies residues 13-58; it reads LAASEAPRDPPGQAKPRGAPVKRPRKTKAIQAQKLRNSAKGKVPKS. Ser-84 is subject to Phosphoserine.

The protein belongs to the AROS family. As to quaternary structure, part of the small subunit (SSU) processome, composed of more than 70 proteins and the RNA chaperone small nucleolar RNA (snoRNA) U3. Interacts with RPS19; the interaction is direct and mediates the integration of RPS19 in state post-A1. Interacts with SIRT1. In terms of processing, citrullinated by PADI4. In terms of tissue distribution, widely expressed (at protein level).

Its subcellular location is the nucleus. It is found in the nucleolus. Part of the small subunit (SSU) processome, first precursor of the small eukaryotic ribosomal subunit. During the assembly of the SSU processome in the nucleolus, many ribosome biogenesis factors, an RNA chaperone and ribosomal proteins associate with the nascent pre-rRNA and work in concert to generate RNA folding, modifications, rearrangements and cleavage as well as targeted degradation of pre-ribosomal RNA by the RNA exosome. Acts as a chaperone that specifically mediates the integration of RPS19 in state post-A1. Direct regulator of SIRT1. Enhances SIRT1-mediated deacetylation of p53/TP53, thereby participating in inhibition of p53/TP53-mediated transcriptional activity. The polypeptide is Active regulator of SIRT1 (Homo sapiens (Human)).